Reading from the N-terminus, the 2715-residue chain is Cilia- and flagella-associated protein 46 (2715 aa).

10 TPR repeats span residues 89 to 122 (CRAQ…AKGE), 175 to 208 (AELM…IKSH), 261 to 295 (GDIS…LLFE), 324 to 359 (PGKL…AQLD), 426 to 459 (CQVH…DSLG), 469 to 503 (STRL…TPKD), 807 to 845 (SRKF…TNGS), 936 to 969 (LQTL…GIKY), 1111 to 1144 (AALY…LPRT), and 1174 to 1211 (AESE…LQKP). The disordered stretch occupies residues 1356-1412 (SHLLLPKKEKENERSKEKEKERSKEKENERSKEKDKEKGKEEKVKEPKQSQSPAPIK). Positions 1361–1403 (PKKEKENERSKEKEKERSKEKENERSKEKDKEKGKEEKVKEPK) are enriched in basic and acidic residues. The stretch at 1362-1401 (KKEKENERSKEKEKERSKEKENERSKEKDKEKGKEEKVKE) forms a coiled coil. A TPR 11 repeat occupies 1639-1672 (AQCLLLLAQLANKEKNYGQAKKMIAQAQHLGGSE). Positions 1781–1810 (VDVKLERAKIKRLRAQNEKDEEQKTAYYLE) form a coiled coil. Disordered regions lie at residues 2000 to 2023 (EEEG…EHCR), 2294 to 2319 (AVVA…HSTV), and 2371 to 2399 (ETEG…KGSI). 2 stretches are compositionally biased toward basic and acidic residues: residues 2300–2311 (GKSKGKDKERKT) and 2371–2383 (ETEG…GRSR). Residues 2384-2398 (DPKKRSLAKKGRKGS) are compositionally biased toward basic residues. TPR repeat units lie at residues 2399–2432 (IPRT…EMLT) and 2504–2537 (VAVL…EANW). Residues 2541-2567 (ASPSEDEWRRGGEPRRGFSDLEGQAAA) are disordered. The span at 2546-2559 (DEWRRGGEPRRGFS) shows a compositional bias: basic and acidic residues.

The protein belongs to the CFAP46 family.

Its subcellular location is the cytoplasm. It localises to the cytoskeleton. The protein resides in the cilium axoneme. In terms of biological role, as part of the central apparatus of the cilium axoneme plays a role in cilium movement. This chain is Cilia- and flagella-associated protein 46, found in Homo sapiens (Human).